Consider the following 150-residue polypeptide: MATVYDVPGDLLVERVAQRLKEIPEIKPPEWAPFVKTGRHKERLPEQEDWWYYRVASILRRVYLDGPVGIERLRTYYGGRKNRGHAPERFYKAGGSIIRKALQQLEAAGFVEKVPGKGRVITPKGRSFLDKIATELKKELEEIIPELKKY.

The protein belongs to the eukaryotic ribosomal protein eS19 family. In terms of assembly, part of the 30S ribosomal subunit.

In terms of biological role, may be involved in maturation of the 30S ribosomal subunit. The polypeptide is Small ribosomal subunit protein eS19 (rps19e) (Pyrococcus abyssi (strain GE5 / Orsay)).